The following is a 277-amino-acid chain: Caspase-3 (277 aa).

Met-1 carries the N-acetylmethionine modification. Propeptides lie at residues 1–9 (MENTENSVD) and 10–28 (SKSI…KSVD). Residues 1 to 10 (MENTENSVDS) are compositionally biased toward polar residues. The tract at residues 1–25 (MENTENSVDSKSIKNSEPKIIHGSK) is disordered. An N6-acetyllysine modification is found at Lys-11. Residues 11-20 (KSIKNSEPKI) are compositionally biased toward basic and acidic residues. At Ser-26 the chain carries Phosphoserine. Catalysis depends on residues His-121 and Cys-163. Cys-163 is subject to S-nitrosocysteine; in inhibited form.

The protein belongs to the peptidase C14A family. In terms of assembly, heterotetramer that consists of two anti-parallel arranged heterodimers, each one formed by a 17 kDa (p17) and a 12 kDa (p12) subunit. Interacts with BIRC6/bruce. In terms of processing, cleavage by granzyme B, caspase-6, caspase-8 and caspase-10 generates the two active subunits. Additional processing of the propeptides is likely due to the autocatalytic activity of the activated protease. Active heterodimers between the small subunit of caspase-7 protease and the large subunit of caspase-3 also occur and vice versa. S-nitrosylated on its catalytic site cysteine in unstimulated cell lines and denitrosylated upon activation of the Fas apoptotic pathway, associated with an increase in intracellular caspase activity. Fas therefore activates caspase-3 not only by inducing the cleavage of the caspase zymogen to its active subunits, but also by stimulating the denitrosylation of its active site thiol. Post-translationally, ubiquitinated by BIRC6; this activity is inhibited by DIABLO/SMAC.

Its subcellular location is the cytoplasm. The catalysed reaction is Strict requirement for an Asp residue at positions P1 and P4. It has a preferred cleavage sequence of Asp-Xaa-Xaa-Asp-|- with a hydrophobic amino-acid residue at P2 and a hydrophilic amino-acid residue at P3, although Val or Ala are also accepted at this position.. With respect to regulation, inhibited by BIRC6; following inhibition of BIRC6-caspase binding by DIABLO/SMAC, BIRC6 is subjected to caspase cleavage, leading to an increase in active caspases. Its function is as follows. Involved in the activation cascade of caspases responsible for apoptosis execution. At the onset of apoptosis, it proteolytically cleaves poly(ADP-ribose) polymerase PARP1 at a '216-Asp-|-Gly-217' bond. Cleaves and activates sterol regulatory element binding proteins (SREBPs) between the basic helix-loop-helix leucine zipper domain and the membrane attachment domain. Cleaves and activates caspase-6, -7 and -9 (CASP6, CASP7 and CASP9, respectively). Cleaves and inactivates interleukin-18 (IL18). Triggers cell adhesion in sympathetic neurons through RET cleavage. Cleaves IL-1 beta between an Asp and an Ala, releasing the mature cytokine which is involved in a variety of inflammatory processes. Cleaves and inhibits serine/threonine-protein kinase AKT1 in response to oxidative stress. Acts as an inhibitor of type I interferon production during virus-induced apoptosis by mediating cleavage of antiviral proteins CGAS, IRF3 and MAVS, thereby preventing cytokine overproduction. Also involved in pyroptosis by mediating cleavage and activation of gasdermin-E (GSDME). Cleaves XRCC4 and phospholipid scramblase proteins XKR4, XKR8 and XKR9, leading to promote phosphatidylserine exposure on apoptotic cell surface. Cleaves BIRC6 following inhibition of BIRC6-caspase binding by DIABLO/SMAC. This chain is Caspase-3 (CASP3), found in Saimiri boliviensis boliviensis (Bolivian squirrel monkey).